A 58-amino-acid chain; its full sequence is Small ribosomal subunit protein bS21 (58 aa).

A disordered region spans residues 25-58 (KAGTLQEARKREHYEKPSVKRKRKSEAARKRKKI). Residues 31 to 42 (EARKREHYEKPS) are compositionally biased toward basic and acidic residues. Over residues 43–58 (VKRKRKSEAARKRKKI) the composition is skewed to basic residues.

It belongs to the bacterial ribosomal protein bS21 family.

The sequence is that of Small ribosomal subunit protein bS21 from Streptococcus thermophilus (strain ATCC BAA-491 / LMD-9).